The chain runs to 126 residues: Protein chibby homolog 1 (126 aa).

A compositionally biased stretch (polar residues) spans 1-10; sequence MPFFGNTFSP. The segment at 1 to 26 is disordered; the sequence is MPFFGNTFSPKKTPPRKSASLSNLHS. Phosphoserine occurs at positions 9 and 20. Residues 60-112 form a minimal region for the interaction with PKD2 region; sequence IAETGVSGGVDRREVQRLRRRNQQLEEENNLLRLKVDILLDMLSESTAESHLM. Residues 67–125 adopt a coiled-coil conformation; it reads GGVDRREVQRLRRRNQQLEEENNLLRLKVDILLDMLSESTAESHLMEKELDELRISRKR. The leucine-zipper; mediates homodimerization stretch occupies residues 77–98; the sequence is LRRRNQQLEEENNLLRLKVDIL.

This sequence belongs to the chibby family. Homodimer. Homodimerization is essential for nuclear localization and interaction with KPNA4 but is dispensable for interaction with CTNNB1. Interacts with polycystin-2/PKD2 and GM130. Interacts with the C-terminal region of CTNNB1. Interacts (C-terminus) with TCIM (C-terminus), TCIM competes with CTNNB1 for the interaction with CBY1. Interacts with FAM92A; this interaction facilitates targeting of FAM92A to cilium basal body. Interacts with CIBAR2. Interacts with KPNA4. As to expression, widely expressed. Expressed at higher levels in heart, skeletal muscle, kidney and placenta. Also found in brain, lung, liver and testis. Significantly down-regulated in thyroid and metastatic uterine tumors.

The protein localises to the nucleus speckle. It localises to the cytoplasm. The protein resides in the cytoskeleton. Its subcellular location is the cilium basal body. It is found in the microtubule organizing center. The protein localises to the centrosome. It localises to the centriole. The protein resides in the golgi apparatus. Its subcellular location is the trans-Golgi network. It is found in the cell projection. The protein localises to the cilium. It localises to the flagellum. The protein resides in the nucleus. Functionally, inhibits the Wnt/Wingless pathway by binding to CTNNB1/beta-catenin and inhibiting beta-catenin-mediated transcriptional activation through competition with TCF/LEF transcription factors. Has also been shown to play a role in regulating the intracellular trafficking of polycystin-2/PKD2 and possibly of other intracellular proteins. Promotes adipocyte and cardiomyocyte differentiation. The sequence is that of Protein chibby homolog 1 (CBY1) from Homo sapiens (Human).